The chain runs to 242 residues: ATP synthase subunit a (242 aa).

Transmembrane regions (helical) follow at residues 29 to 49, 84 to 104, 114 to 134, 140 to 160, 181 to 201, and 203 to 223; these read SSIYMLLASTLALTYFYLAFY, FIPLVFSLFIFILFCNLLGMT, IIVTFTLALLIFLTVTIVGFI, FLTLFLPQGTPVWLAPLMIVI, MAGHVLLKVIAGFTVSLMIYL, and FLPIPLIVILIGFEIFVAILQ.

The protein belongs to the ATPase A chain family. F-type ATPases have 2 components, CF(1) - the catalytic core - and CF(0) - the membrane proton channel. CF(1) has five subunits: alpha(3), beta(3), gamma(1), delta(1), epsilon(1). CF(0) has three main subunits: a(1), b(2) and c(9-12). The alpha and beta chains form an alternating ring which encloses part of the gamma chain. CF(1) is attached to CF(0) by a central stalk formed by the gamma and epsilon chains, while a peripheral stalk is formed by the delta and b chains.

The protein resides in the cell inner membrane. Its function is as follows. Key component of the proton channel; it plays a direct role in the translocation of protons across the membrane. The sequence is that of ATP synthase subunit a from Rickettsia typhi (strain ATCC VR-144 / Wilmington).